The following is a 197-amino-acid chain: GCN5-related N-acetyltransferase 1, chloroplastic (197 aa).

The transit peptide at 1-37 (MFLGGTISTPPASLRLRSTLNPQNAVTQSSSQATFPA) directs the protein to the chloroplast. Over residues 23–34 (QNAVTQSSSQAT) the composition is skewed to polar residues. A disordered region spans residues 23-46 (QNAVTQSSSQATFPAAMQRKPPSY). An N-acetyltransferase domain is found at 58–195 (FLLRRTTEGL…GMVFIRKQRN (138 aa)). Residues 129 to 131 (VVV), 137 to 142 (SCGLGK), 165 to 167 (EPR), and Tyr-172 contribute to the acetyl-CoA site. Catalysis depends on Tyr-172, which acts as the Proton donor.

Belongs to the acetyltransferase family. GNAT subfamily. Oligomer. In terms of processing, autoacetylated. As to expression, expressed in green tissues. Accumulates mainly in flowers and young leaves, and, to a lower extent, in stems and mature leaves, but barely in roots.

Its subcellular location is the plastid. It is found in the chloroplast. The enzyme catalyses an N-terminal L-alpha-aminoacyl-[protein] + acetyl-CoA = N-terminal N(alpha)-acetyl-L-alpha-aminoacyl-[protein] + CoA + H(+). It catalyses the reaction L-lysyl-[protein] + acetyl-CoA = N(6)-acetyl-L-lysyl-[protein] + CoA + H(+). It carries out the reaction 5-methoxytryptamine + acetyl-CoA = melatonin + CoA + H(+). The catalysed reaction is serotonin + acetyl-CoA = N-acetylserotonin + CoA + H(+). Its activity is regulated as follows. Inhibited by 5-methoxytryptamine in vitro. Protein acetyltransferase with dual specificity triggering both N-alpha-acetylation (NTA) and epsilon-lysine acetylation (KA), possibly with a low efficiency or toward specific plastid substrates. Involved in melatonin biosynthesis by catalyzing the formation of N-acetylserotonin (NAS) from serotonin and of melatonin (N-acetyl-5-methoxytryptamine) from 5-methoxytryptamine (5-MT). This chain is GCN5-related N-acetyltransferase 1, chloroplastic, found in Arabidopsis thaliana (Mouse-ear cress).